A 187-amino-acid polypeptide reads, in one-letter code: Large ribosomal subunit protein uL5 (187 aa).

The protein belongs to the universal ribosomal protein uL5 family. As to quaternary structure, part of the 50S ribosomal subunit; part of the 5S rRNA/L5/L18/L25 subcomplex. Contacts the 5S rRNA and the P site tRNA. Forms a bridge to the 30S subunit in the 70S ribosome.

Its function is as follows. This is one of the proteins that bind and probably mediate the attachment of the 5S RNA into the large ribosomal subunit, where it forms part of the central protuberance. In the 70S ribosome it contacts protein S13 of the 30S subunit (bridge B1b), connecting the 2 subunits; this bridge is implicated in subunit movement. Contacts the P site tRNA; the 5S rRNA and some of its associated proteins might help stabilize positioning of ribosome-bound tRNAs. The chain is Large ribosomal subunit protein uL5 from Mycobacterium bovis (strain BCG / Tokyo 172 / ATCC 35737 / TMC 1019).